A 147-amino-acid chain; its full sequence is 3-hydroxyacyl-[acyl-carrier-protein] dehydratase FabZ (147 aa).

H49 is an active-site residue.

The protein belongs to the thioester dehydratase family. FabZ subfamily.

It is found in the cytoplasm. The enzyme catalyses a (3R)-hydroxyacyl-[ACP] = a (2E)-enoyl-[ACP] + H2O. Involved in unsaturated fatty acids biosynthesis. Catalyzes the dehydration of short chain beta-hydroxyacyl-ACPs and long chain saturated and unsaturated beta-hydroxyacyl-ACPs. This Alkaliphilus metalliredigens (strain QYMF) protein is 3-hydroxyacyl-[acyl-carrier-protein] dehydratase FabZ.